The sequence spans 896 residues: Putative mannosylglycerate hydrolase (896 aa).

A divalent metal cation-binding residues include H12, D14, D125, and H348. Catalysis depends on D125, which acts as the Nucleophile.

The protein belongs to the glycosyl hydrolase 38 family. Requires a divalent metal cation as cofactor.

The catalysed reaction is (2R)-2-O-(6-phospho-alpha-D-mannosyl)-glycerate + H2O = alpha-D-mannose 6-phosphate + (R)-glycerate. Its function is as follows. May hydrolyze 6-phospho-mannosyl-D-glycerate to mannose-6-phosphate and glycerate. The protein is Putative mannosylglycerate hydrolase (mngB) of Halalkalibacterium halodurans (strain ATCC BAA-125 / DSM 18197 / FERM 7344 / JCM 9153 / C-125) (Bacillus halodurans).